Consider the following 364-residue polypeptide: MKFNKVLENIQTYEAGKPIELVVREFGIAPKDVVKLASNENPIGTNPAITKVIRSNADIAHLYPDDSMFELKEALSRKFDVEDENIIIGAGSDQVLEFISRALLNEASSVLMSAVTFAMYEIYAKQMGAKIIRTESYEHKYDEFIEAYHTYKPKIIYICTPNNPTGDATSREEVLKIIEGVDKDTLVVVDGAYMEYAAAKDQKHAIAPTDLLKYENVIYLGTFSKAHGLGGMRVGYGIAQAKLIKELYKMRPPFNITTLSLLVAIEACKDDSFVEASIALHQEQIKRYETFAKENGISYIESYTNFITYLFDENLDSTQISDALLKRGVIIRNLASYGMNGVRITIGTEVQNDVFFRHFAEVIS.

Lysine 225 carries the post-translational modification N6-(pyridoxal phosphate)lysine.

It belongs to the class-II pyridoxal-phosphate-dependent aminotransferase family. Histidinol-phosphate aminotransferase subfamily. In terms of assembly, homodimer. Pyridoxal 5'-phosphate serves as cofactor.

The catalysed reaction is L-histidinol phosphate + 2-oxoglutarate = 3-(imidazol-4-yl)-2-oxopropyl phosphate + L-glutamate. The protein operates within amino-acid biosynthesis; L-histidine biosynthesis; L-histidine from 5-phospho-alpha-D-ribose 1-diphosphate: step 7/9. This chain is Histidinol-phosphate aminotransferase, found in Sulfurovum sp. (strain NBC37-1).